Reading from the N-terminus, the 572-residue chain is MHWLWKIPRLCTFWGTEMFHRTFHMNIKKLMPIQWGHQEVPAKFNFASDVIDHWASLEKAGKRSPGPALWWMNGSGEELKWNFRELSEISKQTANVLTGACGLQRGDRVAVVLPRVPEWWLVTLGCMRSGLVFMPGTTQMKSTDILYRLQSSKARAIVAGDEVVQEVDAVAPDCSFLKIKLLVSEKNREGWLNFKALLKDASPIHQCVETVSQESAAIYFTSGTSGPPKMAEHSHCSLGLKAKMDAGWTGLGPSDTMWTISDTGWILNILGSFLEPWVLGTCIFVHLLPKFDPQTVLKVLSSYPINTLLGAPLIYRMLLQQDLSSYKFPHLHSCFSGGETLLPETLESWKAKTGLEIREIYGQTETGITCRVSRTMKVKPGYLGTAIVPYDVQVIDEQGNVLPPGKEGDMALRVKPIRPIGMFSGYVDNPKKTQANIRGDFWLLGDRGIKDTEGYFHFMGRTDDIINSSGYRIGPSEVENALMEHPAVVETAVISSPDPIRREVVKAFVVLAPEFLSHDQDQLTKVLQEHVKSVTAPYKYPRKVEFVLDLPKTITGKIERAKLRAKEWKTSG.

The N-terminal 46 residues, 1-46 (MHWLWKIPRLCTFWGTEMFHRTFHMNIKKLMPIQWGHQEVPAKFNF), are a transit peptide targeting the mitochondrion. CoA is bound at residue Gln-139. ATP contacts are provided by residues 221-229 (TSGTSGPPK), 359-364 (EIYGQT), Asp-446, and Arg-461. Residue Thr-364 coordinates substrate. 469–471 (SGY) contacts CoA. Substrate is bound at residue Arg-472. CoA is bound by residues Arg-501, Lys-532, and 540–542 (YPR). Residue Lys-557 participates in ATP binding.

This sequence belongs to the ATP-dependent AMP-binding enzyme family. Monomer. It depends on Mg(2+) as a cofactor. Mn(2+) is required as a cofactor. As to expression, detected in kidney, in proximal tubules.

The protein resides in the mitochondrion. The catalysed reaction is a medium-chain fatty acid + ATP + CoA = a medium-chain fatty acyl-CoA + AMP + diphosphate. The enzyme catalyses benzoate + ATP + CoA = benzoyl-CoA + AMP + diphosphate. It carries out the reaction hexanoate + ATP + CoA = hexanoyl-CoA + AMP + diphosphate. It catalyses the reaction butanoate + ATP + CoA = butanoyl-CoA + AMP + diphosphate. The catalysed reaction is octanoate + ATP + CoA = octanoyl-CoA + AMP + diphosphate. The enzyme catalyses decanoate + ATP + CoA = decanoyl-CoA + AMP + diphosphate. Functionally, catalyzes the activation of fatty acids by CoA to produce an acyl-CoA, the first step in fatty acid metabolism. Capable of activating medium-chain fatty acids (e.g. butyric (C4) to decanoic (C10) acids), and certain carboxylate-containing xenobiotics, e.g. benzoate. The protein is Acyl-coenzyme A synthetase ACSM2, mitochondrial (Acsm2) of Rattus norvegicus (Rat).